A 348-amino-acid chain; its full sequence is Dihydroorotase (348 aa).

Zn(2+)-binding residues include His17 and His19. Substrate contacts are provided by residues 19–21 (HLR) and Asn45. Zn(2+)-binding residues include Lys103, His140, and His178. Lys103 is subject to N6-carboxylysine. His140 contributes to the substrate binding site. Leu223 serves as a coordination point for substrate. Residue Asp251 participates in Zn(2+) binding. Asp251 is a catalytic residue. Substrate is bound by residues His255 and Ala267.

It belongs to the metallo-dependent hydrolases superfamily. DHOase family. Class II DHOase subfamily. Homodimer. Zn(2+) is required as a cofactor.

It carries out the reaction (S)-dihydroorotate + H2O = N-carbamoyl-L-aspartate + H(+). It functions in the pathway pyrimidine metabolism; UMP biosynthesis via de novo pathway; (S)-dihydroorotate from bicarbonate: step 3/3. Catalyzes the reversible cyclization of carbamoyl aspartate to dihydroorotate. This chain is Dihydroorotase, found in Escherichia coli (strain SMS-3-5 / SECEC).